The sequence spans 216 residues: Imidazoleglycerol-phosphate dehydratase (216 aa).

The protein belongs to the imidazoleglycerol-phosphate dehydratase family.

It localises to the cytoplasm. The enzyme catalyses D-erythro-1-(imidazol-4-yl)glycerol 3-phosphate = 3-(imidazol-4-yl)-2-oxopropyl phosphate + H2O. It participates in amino-acid biosynthesis; L-histidine biosynthesis; L-histidine from 5-phospho-alpha-D-ribose 1-diphosphate: step 6/9. The polypeptide is Imidazoleglycerol-phosphate dehydratase (Nocardia farcinica (strain IFM 10152)).